Consider the following 519-residue polypeptide: Sorting nexin-2 (519 aa).

Positions 30-50 are enriched in low complexity; the sequence is STVSTLESSPSSPEPASLPAE. Positions 30–62 are disordered; that stretch reads STVSTLESSPSSPEPASLPAEDISANSNGSKPV. Ser97 bears the Phosphoserine mark. Phosphothreonine occurs at positions 101 and 104. Ser117 and Ser119 each carry phosphoserine. In terms of domain architecture, PX spans 140-269; it reads FDIEIGVSDP…QFLESSELPR (130 aa). Residues Arg183, Ser185, Lys211, and Arg235 each coordinate a 1,2-diacyl-sn-glycero-3-phospho-(1D-myo-inositol-3-phosphate). Position 185 is a phosphoserine (Ser185). Positions 260-519 are interaction with RhoG; sequence QFLESSELPR…AFLPEAKAIA (260 aa). Ser277 bears the Phosphoserine mark. Residues 278–295 are membrane-binding amphipathic helix; sequence GAGILRMVNKAADAVNKM. Positions 299–519 constitute a BAR domain; it reads MNESDAWFEE…AFLPEAKAIA (221 aa). Lys469 is subject to N6-acetyllysine.

Belongs to the sorting nexin family. In terms of assembly, predominantly forms heterodimers with BAR domain-containing sorting nexins SNX5, SNX6 and SNX32; can self-associate to form homodimers. The heterodimers are proposed to self-assemble into helical arrays on the membrane to stabilize and expand local membrane curvature underlying endosomal tubule formation. Thought to be a component of the originally described retromer complex (also called SNX-BAR retromer) which is a pentamer containing the heterotrimeric retromer cargo-selective complex (CSC), also described as vacuolar protein sorting subcomplex (VPS), and a heterodimeric membrane-deforming subcomplex formed between SNX1 or SNX2 and SNX5 or SNX6 (also called SNX-BAR subcomplex); the respective CSC and SNX-BAR subcomplexes associate with low affinity. Interacts with SNX5, SNX6, SNX32, VPS26A, VPS29, VPS35, FNBP1, KALRN, RHOG (GDP-bound form).

It is found in the early endosome membrane. The protein localises to the cell projection. The protein resides in the lamellipodium. Functionally, involved in several stages of intracellular trafficking. Interacts with membranes containing phosphatidylinositol 3-phosphate (PtdIns(3P)) or phosphatidylinositol 3,5-bisphosphate (PtdIns(3,5)P2). Acts in part as component of the retromer membrane-deforming SNX-BAR subcomplex. The SNX-BAR retromer mediates retrograde transport of cargo proteins from endosomes to the trans-Golgi network (TGN) and is involved in endosome-to-plasma membrane transport for cargo protein recycling. The SNX-BAR subcomplex functions to deform the donor membrane into a tubular profile called endosome-to-TGN transport carrier (ETC). Can sense membrane curvature and has in vitro vesicle-to-membrane remodeling activity. Required for retrograde endosome-to-TGN transport of TGN38. Promotes KALRN- and RHOG-dependent but retromer-independent membrane remodeling such as lamellipodium formation; the function is dependent on GEF activity of KALRN. In Mus musculus (Mouse), this protein is Sorting nexin-2 (Snx2).